The chain runs to 510 residues: Nectin-4 (510 aa).

The first 31 residues, 1–31, serve as a signal peptide directing secretion; the sequence is MPLSLGAEMWGPAAWLLLLLLLASFTGQRLA. One can recognise an Ig-like V-type domain in the interval 32–144; sequence GELETSDLVT…GSFQARLRLR (113 aa). The Extracellular portion of the chain corresponds to 32-349; it reads GELETSDLVT…GKQVDLVSAS (318 aa). 3 cysteine pairs are disulfide-bonded: cysteine 52–cysteine 127, cysteine 171–cysteine 223, and cysteine 270–cysteine 315. 2 consecutive Ig-like C2-type domains span residues 148–237 and 248–331; these read PPLP…QRIT and ASVR…VVVD. Asparagine 281 carries N-linked (GlcNAc...) asparagine glycosylation. Residues 350–370 traverse the membrane as a helical segment; sequence VVVVGVIAALLFCLLVVVVVL. The Cytoplasmic portion of the chain corresponds to 371–510; it reads MSRYHRRKAQ…IYINGRGHLV (140 aa). Basic and acidic residues predominate over residues 400–412; sequence RLHSHHSDPRNQP. The disordered stretch occupies residues 400 to 475; it reads RLHSHHSDPR…GRAEEEEDRD (76 aa).

This sequence belongs to the nectin family. Self-associates. Interacts via its Ig-like V-type domain with NECTIN1 Ig-like V-type domain. Interacts via its C-terminus with AFDN. Interacts with TIGIT.

Its subcellular location is the cell membrane. The protein localises to the cell junction. It localises to the adherens junction. Functionally, seems to be involved in cell adhesion through trans-homophilic and -heterophilic interactions, the latter including specifically interactions with NECTIN1. Plays a role in the senescence-associated cell size enlargement via SFK/PI3K/Rac1 and thus promotes senescent cell survival. Also participates in the innate immune response by acting as a ligand for the receptor TIGIT to inhibit NK-cell activity. In Bos taurus (Bovine), this protein is Nectin-4.